Reading from the N-terminus, the 353-residue chain is Photosystem II protein D1 (353 aa).

Thr-2 is modified (N-acetylthreonine). Thr-2 bears the Phosphothreonine mark. 3 helical membrane-spanning segments follow: residues 29–46, 118–133, and 142–156; these read YIGWFGVLMIPTLLTATS, HFLLGVACYMGREWEL, and WIAVAYSAPVAAAAA. Position 118 (His-118) interacts with chlorophyll a. Tyr-126 contacts pheophytin a. Asp-170 and Glu-189 together coordinate [CaMn4O5] cluster. Residues 197–218 form a helical membrane-spanning segment; the sequence is FHMLGVAGVFGGSLFSAMHGSL. His-198 lines the chlorophyll a pocket. Residues His-215 and 264-265 each bind a quinone; that span reads SF. His-215 is a Fe cation binding site. His-272 contributes to the Fe cation binding site. A helical transmembrane segment spans residues 274–288; it reads FLAAWPVVGIWFTAL. Residues His-332, Glu-333, Asp-342, and Ala-344 each contribute to the [CaMn4O5] cluster site. A propeptide spanning residues 345–353 is cleaved from the precursor; it reads SVEAPSVKA.

The protein belongs to the reaction center PufL/M/PsbA/D family. As to quaternary structure, PSII is composed of 1 copy each of membrane proteins PsbA, PsbB, PsbC, PsbD, PsbE, PsbF, PsbH, PsbI, PsbJ, PsbK, PsbL, PsbM, PsbT, PsbX, PsbY, PsbZ, Psb30/Ycf12, at least 3 peripheral proteins of the oxygen-evolving complex and a large number of cofactors. It forms dimeric complexes. Requires The D1/D2 heterodimer binds P680, chlorophylls that are the primary electron donor of PSII, and subsequent electron acceptors. It shares a non-heme iron and each subunit binds pheophytin, quinone, additional chlorophylls, carotenoids and lipids. D1 provides most of the ligands for the Mn4-Ca-O5 cluster of the oxygen-evolving complex (OEC). There is also a Cl(-1) ion associated with D1 and D2, which is required for oxygen evolution. The PSII complex binds additional chlorophylls, carotenoids and specific lipids. as cofactor. Post-translationally, tyr-161 forms a radical intermediate that is referred to as redox-active TyrZ, YZ or Y-Z. C-terminally processed by CTPA; processing is essential to allow assembly of the oxygen-evolving complex and thus photosynthetic growth.

Its subcellular location is the plastid. The protein resides in the chloroplast thylakoid membrane. The enzyme catalyses 2 a plastoquinone + 4 hnu + 2 H2O = 2 a plastoquinol + O2. Its function is as follows. Photosystem II (PSII) is a light-driven water:plastoquinone oxidoreductase that uses light energy to abstract electrons from H(2)O, generating O(2) and a proton gradient subsequently used for ATP formation. It consists of a core antenna complex that captures photons, and an electron transfer chain that converts photonic excitation into a charge separation. The D1/D2 (PsbA/PsbD) reaction center heterodimer binds P680, the primary electron donor of PSII as well as several subsequent electron acceptors. This is Photosystem II protein D1 from Angiopteris evecta (Mule's foot fern).